The primary structure comprises 1022 residues: Translation initiation factor IF-2 (1022 aa).

Over residues 82–94 (EQSRKTLEKEQHL) the composition is skewed to basic and acidic residues. 2 disordered regions span residues 82-129 (EQSR…AVPA) and 342-436 (SENK…QREL). Low complexity predominate over residues 104–115 (ASKSSAKGSESA). The segment covering 375-384 (KAKKGKKKKK) has biased composition (basic residues). Residues 421–436 (SEREREQEEGAAQREL) show a composition bias toward basic and acidic residues. A tr-type G domain is found at 519 to 689 (TRPPVVTIMG…LTEAELRELK (171 aa)). The interval 528-535 (GHVDHGKT) is G1. Position 528 to 535 (528 to 535 (GHVDHGKT)) interacts with GTP. Residues 553-557 (GITQH) form a G2 region. Positions 575–578 (DTPG) are G3. GTP contacts are provided by residues 575–579 (DTPGH) and 629–632 (NKID). Residues 629–632 (NKID) are G4. Positions 665 to 667 (SAK) are G5.

This sequence belongs to the TRAFAC class translation factor GTPase superfamily. Classic translation factor GTPase family. IF-2 subfamily.

It localises to the cytoplasm. One of the essential components for the initiation of protein synthesis. Protects formylmethionyl-tRNA from spontaneous hydrolysis and promotes its binding to the 30S ribosomal subunits. Also involved in the hydrolysis of GTP during the formation of the 70S ribosomal complex. The polypeptide is Translation initiation factor IF-2 (Chlorobium chlorochromatii (strain CaD3)).